The chain runs to 363 residues: Histidinol-phosphate aminotransferase (363 aa).

Lys-215 is subject to N6-(pyridoxal phosphate)lysine.

This sequence belongs to the class-II pyridoxal-phosphate-dependent aminotransferase family. Histidinol-phosphate aminotransferase subfamily. Homodimer. The cofactor is pyridoxal 5'-phosphate.

The catalysed reaction is L-histidinol phosphate + 2-oxoglutarate = 3-(imidazol-4-yl)-2-oxopropyl phosphate + L-glutamate. It functions in the pathway amino-acid biosynthesis; L-histidine biosynthesis; L-histidine from 5-phospho-alpha-D-ribose 1-diphosphate: step 7/9. This Buchnera aphidicola subsp. Diuraphis noxia protein is Histidinol-phosphate aminotransferase.